Consider the following 494-residue polypeptide: NADPH:adrenodoxin oxidoreductase, mitochondrial (494 aa).

A mitochondrion-targeting transit peptide spans 1–34 (MAPRCWHWWRWSAWSGLRPSPSRSTPTPGFCQKF). FAD-binding residues include Ala-51, Glu-72, Leu-80, and Val-116. Residues 187–190 (QGNV), 231–232 (RR), and Glu-243 each bind NADP(+). At Ser-313 the chain carries Phosphoserine. FAD contacts are provided by residues Trp-401 and 408-410 (GVI). Gly-408 is a binding site for NADP(+).

The protein belongs to the ferredoxin--NADP reductase type 1 family. Monomer. Interacts directly with FDX1. Requires FAD as cofactor. In terms of tissue distribution, expressed in the adrenal, testis and ovary and to a lesser extent in the liver and kidney.

The protein resides in the mitochondrion inner membrane. The catalysed reaction is 2 reduced [adrenodoxin] + NADP(+) + H(+) = 2 oxidized [adrenodoxin] + NADPH. It carries out the reaction 2 reduced [2Fe-2S]-[ferredoxin] + NADP(+) + H(+) = 2 oxidized [2Fe-2S]-[ferredoxin] + NADPH. The protein operates within steroid metabolism; cholesterol metabolism. Functionally, serves as the first electron transfer protein in all the mitochondrial P450 systems including cholesterol side chain cleavage in all steroidogenic tissues, steroid 11-beta hydroxylation in the adrenal cortex, 25-OH-vitamin D3-24 hydroxylation in the kidney, and sterol C-27 hydroxylation in the liver. Also acts as a ferredoxin--NADP(+) reductase essential for coenzyme Q biosynthesis: together with FDX2, transfers the electrons required for the hydroxylation reaction performed by COQ6. This Mus musculus (Mouse) protein is NADPH:adrenodoxin oxidoreductase, mitochondrial (Fdxr).